Consider the following 693-residue polypeptide: Elongation factor G (693 aa).

The region spanning 9–283 (ERVRNIGIIA…AVCDYLPSPL (275 aa)) is the tr-type G domain. GTP contacts are provided by residues 18–25 (AHIDAGKT), 82–86 (DTPGH), and 136–139 (NKMD).

It belongs to the TRAFAC class translation factor GTPase superfamily. Classic translation factor GTPase family. EF-G/EF-2 subfamily.

Its subcellular location is the cytoplasm. Its function is as follows. Catalyzes the GTP-dependent ribosomal translocation step during translation elongation. During this step, the ribosome changes from the pre-translocational (PRE) to the post-translocational (POST) state as the newly formed A-site-bound peptidyl-tRNA and P-site-bound deacylated tRNA move to the P and E sites, respectively. Catalyzes the coordinated movement of the two tRNA molecules, the mRNA and conformational changes in the ribosome. This chain is Elongation factor G, found in Dehalococcoides mccartyi (strain ATCC BAA-2100 / JCM 16839 / KCTC 5957 / BAV1).